Consider the following 132-residue polypeptide: Agouti-signaling protein (132 aa).

Positions 1–22 (MDVTRLLLATLLVFLCFFTAYS) are cleaved as a signal peptide. Asn-39 carries N-linked (GlcNAc...) asparagine glycosylation. The disordered stretch occupies residues 60–88 (KQISRKEAEKKRSSKKEASMKKVARPRTP). A compositionally biased stretch (basic and acidic residues) spans 63-79 (SRKEAEKKRSSKKEASM). Intrachain disulfides connect Cys-93/Cys-108, Cys-100/Cys-114, Cys-107/Cys-125, Cys-111/Cys-132, and Cys-116/Cys-123. The 40-residue stretch at 93-132 (CVATRDSCKPPAPACCDPCASCQCRFFRSACSCRVLSLNC) folds into the Agouti domain.

It is found in the secreted. Functionally, involved in the regulation of melanogenesis. The binding of ASP to MC1R precludes alpha-MSH initiated signaling and thus blocks production of cAMP, leading to a down-regulation of eumelanogenesis (brown/black pigment) and thus increasing synthesis of pheomelanin (yellow/red pigment). In Macaca cyclopis (Taiwan macaque), this protein is Agouti-signaling protein (ASIP).